Reading from the N-terminus, the 113-residue chain is Large ribosomal subunit protein uL24 (113 aa).

The protein belongs to the universal ribosomal protein uL24 family. As to quaternary structure, part of the 50S ribosomal subunit.

Functionally, one of two assembly initiator proteins, it binds directly to the 5'-end of the 23S rRNA, where it nucleates assembly of the 50S subunit. One of the proteins that surrounds the polypeptide exit tunnel on the outside of the subunit. In Synechococcus elongatus (strain ATCC 33912 / PCC 7942 / FACHB-805) (Anacystis nidulans R2), this protein is Large ribosomal subunit protein uL24.